Consider the following 628-residue polypeptide: UvrABC system protein C (628 aa).

The 80-residue stretch at 21 to 100 (TGPGIYQFKN…IKELKPRYNV (80 aa)) folds into the GIY-YIG domain. The 36-residue stretch at 214–249 (AGLLKELHEKMLTAAAELRFEEAAELKMQLQSLRRY) folds into the UVR domain.

Belongs to the UvrC family. As to quaternary structure, interacts with UvrB in an incision complex.

It localises to the cytoplasm. In terms of biological role, the UvrABC repair system catalyzes the recognition and processing of DNA lesions. UvrC both incises the 5' and 3' sides of the lesion. The N-terminal half is responsible for the 3' incision and the C-terminal half is responsible for the 5' incision. This Chlorobium luteolum (strain DSM 273 / BCRC 81028 / 2530) (Pelodictyon luteolum) protein is UvrABC system protein C.